The primary structure comprises 376 residues: MSRLQFQLQTRDGRARRGRLTFPRGTVETPAFMPVGTYGSVKGILPDQVRALGAEIILGNTFHLYLRPGLDIIADHGGLHGFCRWDGPILTDSGGFQVFSLAHRRKITEQGVTFASPTDGARVFLGPEESMKIQKVLDSDVVMIFDECTPYPATEDVARRSMELSLRWAQRSRNAHDELGNDAALFGIVQGGVHTDLRSRSADALQAIGFDGYAIGGLAVGEPEDERNAMLDHLDPELPADRPRYLMGVGRPEDLVEGVARGVDMFDCVMPTRNARNGHYFTSFGTVRIRNSQYARDMDPIEPGCGCVACTGGYTRSYLRHLDRCNEMLAPMLGTLHNLFYYEKLMADIRAAIEAGTFLAFRESFYAARGAVAPPL.

The Proton acceptor role is filled by Asp92. Substrate is bound by residues 92–96, Asp146, Gln190, and Gly217; that span reads DSGGF. The RNA binding stretch occupies residues 248–254; sequence GVGRPED. Asp267 (nucleophile) is an active-site residue. Residues 272–276 form an RNA binding; important for wobble base 34 recognition region; the sequence is TRNAR. Zn(2+)-binding residues include Cys305, Cys307, Cys310, and His337.

It belongs to the queuine tRNA-ribosyltransferase family. In terms of assembly, homodimer. Within each dimer, one monomer is responsible for RNA recognition and catalysis, while the other monomer binds to the replacement base PreQ1. It depends on Zn(2+) as a cofactor.

The catalysed reaction is 7-aminomethyl-7-carbaguanine + guanosine(34) in tRNA = 7-aminomethyl-7-carbaguanosine(34) in tRNA + guanine. The protein operates within tRNA modification; tRNA-queuosine biosynthesis. Functionally, catalyzes the base-exchange of a guanine (G) residue with the queuine precursor 7-aminomethyl-7-deazaguanine (PreQ1) at position 34 (anticodon wobble position) in tRNAs with GU(N) anticodons (tRNA-Asp, -Asn, -His and -Tyr). Catalysis occurs through a double-displacement mechanism. The nucleophile active site attacks the C1' of nucleotide 34 to detach the guanine base from the RNA, forming a covalent enzyme-RNA intermediate. The proton acceptor active site deprotonates the incoming PreQ1, allowing a nucleophilic attack on the C1' of the ribose to form the product. After dissociation, two additional enzymatic reactions on the tRNA convert PreQ1 to queuine (Q), resulting in the hypermodified nucleoside queuosine (7-(((4,5-cis-dihydroxy-2-cyclopenten-1-yl)amino)methyl)-7-deazaguanosine). This is Queuine tRNA-ribosyltransferase from Stenotrophomonas maltophilia (strain R551-3).